The primary structure comprises 430 residues: Tol-Pal system protein TolB (430 aa).

A signal peptide spans 1–21; that stretch reads MKQAFRVALGFLILWASVLHA.

The protein belongs to the TolB family. As to quaternary structure, the Tol-Pal system is composed of five core proteins: the inner membrane proteins TolA, TolQ and TolR, the periplasmic protein TolB and the outer membrane protein Pal. They form a network linking the inner and outer membranes and the peptidoglycan layer.

The protein localises to the periplasm. Functionally, part of the Tol-Pal system, which plays a role in outer membrane invagination during cell division and is important for maintaining outer membrane integrity. TolB occupies a key intermediary position in the Tol-Pal system because it communicates directly with both membrane-embedded components, Pal in the outer membrane and TolA in the inner membrane. This Serratia proteamaculans (strain 568) protein is Tol-Pal system protein TolB.